A 376-amino-acid chain; its full sequence is Penicillin V acylase (376 aa).

Residues 1–29 (MIKNNKRIKSTVCALSLVALTLGSAVSLA) form the signal peptide. Cysteine 30 (nucleophile) is an active-site residue.

Belongs to the peptidase C59 family. As to quaternary structure, homotetramer. Dimer of dimers.

Its subcellular location is the periplasm. It catalyses the reaction a penicillin + H2O = 6-aminopenicillanate + a carboxylate. Exhibits uncharacteristic kinetic behavior, showing positive cooperativity coupled with substrate inhibition. Penicillin acylase activity is enhanced in the presence of the reducing agent DTT, indicating active sulfhydryl group in the enzyme. Also shows enhanced activity in presence of organic solvents and detergents. Inhibited largely in presence of Ag(+), Hg(2+) and Cd(2+) ions, which have strong affinities for sulfhydryl groups. Activity is also inhibited by bile salts. Its function is as follows. Catalyzes the hydrolysis of penicillin V to 6-aminopenicillanate (6-APA). Shows high specificity towards penicillin V. Can use other beta-lactam substrates, including penicillin G, ampicillin, cephalexin, cloxacillin and dicloxacillin, but at a rate less than 10% of that of penicillin V. Does not show any activity with glyco- or tauro-conjugated bile salts. This is Penicillin V acylase from Pectobacterium atrosepticum (strain SCRI 1043 / ATCC BAA-672) (Erwinia carotovora subsp. atroseptica).